We begin with the raw amino-acid sequence, 148 residues long: Protein J1 homolog (148 aa).

This sequence belongs to the chordopoxvirinae J1 family. As to quaternary structure, homodimer. Part of a complex composed of A30, G7, F10 kinase, A15, D2, D3, and J1. Interacts with A45.

The protein localises to the virion. Its subcellular location is the host cytoplasm. In terms of biological role, late protein which is a part of a large complex required for early virion morphogenesis. This complex participates in the formation of virosomes and the incorporation of virosomal contents into nascent immature virions. J1 protein is required for DNA packaging during immature virions (IV) formation. The sequence is that of Protein J1 homolog from Fowlpox virus (strain NVSL) (FPV).